The following is a 205-amino-acid chain: GTP cyclohydrolase-2 (205 aa).

49-53 serves as a coordination point for GTP; sequence RLHSE. 3 residues coordinate Zn(2+): Cys54, Cys65, and Cys67. Residues Gln70, 92-94, and Thr114 contribute to the GTP site; that span reads EGR. Catalysis depends on Asp126, which acts as the Proton acceptor. Catalysis depends on Arg128, which acts as the Nucleophile. Residues Thr149 and Lys154 each coordinate GTP.

It belongs to the GTP cyclohydrolase II family. Requires Zn(2+) as cofactor.

The catalysed reaction is GTP + 4 H2O = 2,5-diamino-6-hydroxy-4-(5-phosphoribosylamino)-pyrimidine + formate + 2 phosphate + 3 H(+). It participates in cofactor biosynthesis; riboflavin biosynthesis; 5-amino-6-(D-ribitylamino)uracil from GTP: step 1/4. Its function is as follows. Catalyzes the conversion of GTP to 2,5-diamino-6-ribosylamino-4(3H)-pyrimidinone 5'-phosphate (DARP), formate and pyrophosphate. The protein is GTP cyclohydrolase-2 of Pseudomonas paraeruginosa (strain DSM 24068 / PA7) (Pseudomonas aeruginosa (strain PA7)).